The primary structure comprises 1437 residues: FYVE and coiled-coil domain-containing protein 1 (1437 aa).

N-acetylalanine is present on A2. Positions 4-30 (SSTETQLQRIIRDLQDAATELSHEFKE) form a coiled coil. Residues 36–169 (TDDSTSLHKF…VQFDLAPRGY (134 aa)) enclose the RUN domain. S196 carries the post-translational modification Phosphoserine. Coiled-coil stretches lie at residues 223–270 (SLNN…VSRQ), 305–846 (SQAT…SEGA), and 873–1110 (ALTA…KDAL). Position 372 is a phosphothreonine (T372). At S837 the chain carries Phosphoserine. The FYVE-type zinc-finger motif lies at 1132-1190 (DMEVNHCHDCKREFSWIVRRHHCRICGRIFCYYCCNNYVVTKPSGKKERCCRACFQKFG). The Zn(2+) site is built by C1138, C1141, C1154, C1157, C1162, C1165, C1182, and C1185. Disordered stretches follow at residues 1191–1227 (EGSG…SQGI) and 1253–1289 (SGSS…TEDV). Residues 1194–1206 (GSNDSSGSGTSQG) are compositionally biased toward low complexity. 2 stretches are compositionally biased toward polar residues: residues 1218–1227 (SPQSIGSQGI) and 1253–1283 (SGSS…SLTP). One can recognise a GOLD domain in the interval 1296–1425 (EICLLKSGEL…SKKVLYHLTV (130 aa)).

As to quaternary structure, can form homodimers. Interacts (via C-terminus) with MAP1LC3B. Interacts with RAB7A; the interaction with RAB7A induces FYCO1 recruitment to late endosomal/lysosomal compartments. Expressed in heart and testis. Expressed in the eye lens.

The protein resides in the cytoplasmic vesicle. Its subcellular location is the autophagosome. It is found in the endosome. It localises to the lysosome. Its function is as follows. May mediate microtubule plus end-directed vesicle transport. The sequence is that of FYVE and coiled-coil domain-containing protein 1 (Fyco1) from Mus musculus (Mouse).